The following is a 328-amino-acid chain: 6-phosphogluconolactonase (328 aa).

The protein belongs to the cycloisomerase 2 family.

It carries out the reaction 6-phospho-D-glucono-1,5-lactone + H2O = 6-phospho-D-gluconate + H(+). Its pathway is carbohydrate degradation; pentose phosphate pathway; D-ribulose 5-phosphate from D-glucose 6-phosphate (oxidative stage): step 2/3. Catalyzes the hydrolysis of 6-phosphogluconolactone to 6-phosphogluconate. The protein is 6-phosphogluconolactonase of Xenorhabdus nematophila (strain ATCC 19061 / DSM 3370 / CCUG 14189 / LMG 1036 / NCIMB 9965 / AN6).